A 140-amino-acid chain; its full sequence is Large ribosomal subunit protein uL11 (140 aa).

Belongs to the universal ribosomal protein uL11 family. As to quaternary structure, part of the ribosomal stalk of the 50S ribosomal subunit. Interacts with L10 and the large rRNA to form the base of the stalk. L10 forms an elongated spine to which L12 dimers bind in a sequential fashion forming a multimeric L10(L12)X complex. Post-translationally, one or more lysine residues are methylated.

In terms of biological role, forms part of the ribosomal stalk which helps the ribosome interact with GTP-bound translation factors. This Geobacter metallireducens (strain ATCC 53774 / DSM 7210 / GS-15) protein is Large ribosomal subunit protein uL11.